Here is a 192-residue protein sequence, read N- to C-terminus: Sarcoplasmic calcium-binding protein, beta chain (192 aa).

N-acetylalanine is present on Ala-1. EF-hand domains follow at residues 4–39 (WDNRVKYIVRYMYDIDNDGFLDKNDFECLAVRVTLI), 56–91 (IMANLWNEIAELADFNKDGEVTVDEFKQAVQKNCKG), 100–135 (AFKVFIGNQFKTIDVDGDGMVGVDEYRLDCITRSAF), and 136–171 (ADVKEIDDAYDKLCTEEDKKAGGINLARYQELYAQF). The Ca(2+) site is built by Asp-17, Asp-19, Asp-21, Asp-28, Asp-69, Asn-71, Asp-73, Glu-75, Glu-80, Asp-113, Asp-115, Asp-117, Met-119, and Glu-124.

SCPs from crayfish, lobster, and shrimp are polymorphic dimers; three isotypes (alpha-alpha, alpha-beta, and beta-beta) have been identified.

In terms of biological role, like parvalbumins, SCPs seem to be more abundant in fast contracting muscles, but no functional relationship can be established from this distribution. The protein is Sarcoplasmic calcium-binding protein, beta chain of Penaeus sp. (Penoeid shrimp).